The chain runs to 253 residues: 3-deoxy-manno-octulosonate cytidylyltransferase (253 aa).

The protein belongs to the KdsB family.

The protein localises to the cytoplasm. The enzyme catalyses 3-deoxy-alpha-D-manno-oct-2-ulosonate + CTP = CMP-3-deoxy-beta-D-manno-octulosonate + diphosphate. Its pathway is nucleotide-sugar biosynthesis; CMP-3-deoxy-D-manno-octulosonate biosynthesis; CMP-3-deoxy-D-manno-octulosonate from 3-deoxy-D-manno-octulosonate and CTP: step 1/1. The protein operates within bacterial outer membrane biogenesis; lipopolysaccharide biosynthesis. Its function is as follows. Activates KDO (a required 8-carbon sugar) for incorporation into bacterial lipopolysaccharide in Gram-negative bacteria. The chain is 3-deoxy-manno-octulosonate cytidylyltransferase from Acinetobacter baumannii (strain AYE).